The sequence spans 320 residues: Serpentine receptor class delta-40 (320 aa).

7 helical membrane passes run 12–32 (IFYP…IYLI), 42–62 (MLKV…VVSC), 95–115 (YQVL…TFVF), 133–153 (IILL…IMVI), 189–209 (LINF…SFFF), 243–263 (AFLP…CILT), and 273–293 (FMTV…LYFV).

The protein belongs to the nematode receptor-like protein srd family.

The protein resides in the membrane. The protein is Serpentine receptor class delta-40 (srd-40) of Caenorhabditis elegans.